The sequence spans 370 residues: Vasopressin V2 receptor (370 aa).

A compositionally biased stretch (polar residues) spans 1–21 (MFMASTTSAVPWHLSQPTPAG). Residues 1 to 26 (MFMASTTSAVPWHLSQPTPAGNGSEG) form a disordered region. Residues 1 to 38 (MFMASTTSAVPWHLSQPTPAGNGSEGELLTARDPLLAQ) are Extracellular-facing. N22 carries N-linked (GlcNAc...) asparagine glycosylation. The chain crosses the membrane as a helical span at residues 39 to 63 (AELALLSTVFVAVALSNGLVLGALV). Over 64–77 (RRGRRGRWAPMHVF) the chain is Cytoplasmic. Residues 78-98 (IGHLCLADLAVALFQVLPQLA) form a helical membrane-spanning segment. Over 99-113 (WDATDRFRGPDALCR) the chain is Extracellular. Residues 114-135 (AVKYLQMVGMYASSYMILAMTL) traverse the membrane as a helical segment. Residues 136–159 (DRHRAICRPMLAHRHGGGTHWNRP) are Cytoplasmic-facing. The helical transmembrane segment at 160–180 (VLLAWAFSLLFSLPQLFIFAQ) threads the bilayer. Topologically, residues 181–199 (RDVDGSGVLDCWARFAEPW) are extracellular. A helical membrane pass occupies residues 200–219 (GLRAYVTWIALMVFVAPALG). Over 220 to 270 (IAACQVLIFREIHASLGPGPVPRAGGPRRGCRPGSPAEGARVSAAVAKTVK) the chain is Cytoplasmic. The chain crosses the membrane as a helical span at residues 271-292 (MTLVIVIVYVLCWAPFFLVQLW). The Extracellular portion of the chain corresponds to 293-307 (AAWDPEAPREGPPFV). The helical transmembrane segment at 308-327 (LLMLLASLNSCTNPWIYASF) threads the bilayer. The Cytoplasmic segment spans residues 328–370 (SSSISSELRSLLCCTWRRAPPSPGPQEESCATASSFLAKDTPS). 2 S-palmitoyl cysteine lipidation sites follow: C340 and C341. A disordered region spans residues 347–370 (PPSPGPQEESCATASSFLAKDTPS).

This sequence belongs to the G-protein coupled receptor 1 family. Vasopressin/oxytocin receptor subfamily. In terms of assembly, interacts with ARRDC4. Identified in a complex containing at least ARRDC4, V2R and HGS. Interacts with TMEM147.

The protein resides in the cell membrane. In terms of biological role, receptor for arginine vasopressin. The activity of this receptor is mediated by G proteins which activate adenylate cyclase. Involved in renal water reabsorption. This Bos taurus (Bovine) protein is Vasopressin V2 receptor (AVPR2).